A 409-amino-acid chain; its full sequence is MARAKFERTKPHVNVGTIGHVDHGKTTLTAAITMTLAALGQATAKRYDEIDAAPEERARGITINTAHVEYQTEKRHYAHVDCPGHADYVKNMITGAAQMDGAILVVSAADGPMPQTREHILLARQVGVPSLVVFLNKVDMVDDEELLELVELEIRELLSKYDFPGDEIPIIRGSALKALERMQANPKTQRGEDPWVDKIYELMDAVDSYIPTPERDVDKPFLMAVEDVFSITGRGTVATGRIERGRIKVGETVELVGLRETRSTTVTGLEMFQKTLDEGIAGDNVGVLLRGIQKNEVERGMVLAKPKTITPHTQFESEVYVLKKEEGGRHTPFFAGYRPQFYVRTTDVTGTITSFTADDGSKPEMVMPGDRVRMTVELIQPIAIEQGMRFAIREGGRTVGAGVVSKILK.

The tr-type G domain occupies 10 to 214; it reads KPHVNVGTIG…AVDSYIPTPE (205 aa). The G1 stretch occupies residues 19-26; that stretch reads GHVDHGKT. A GTP-binding site is contributed by 19–26; it reads GHVDHGKT. Mg(2+) is bound at residue threonine 26. A G2 region spans residues 60 to 64; that stretch reads GITIN. Positions 81–84 are G3; it reads DCPG. Residues 81 to 85 and 136 to 139 each bind GTP; these read DCPGH and NKVD. The tract at residues 136-139 is G4; it reads NKVD. Positions 174-176 are G5; it reads SAL.

It belongs to the TRAFAC class translation factor GTPase superfamily. Classic translation factor GTPase family. EF-Tu/EF-1A subfamily. Monomer.

The protein resides in the cytoplasm. It catalyses the reaction GTP + H2O = GDP + phosphate + H(+). GTP hydrolase that promotes the GTP-dependent binding of aminoacyl-tRNA to the A-site of ribosomes during protein biosynthesis. This is Elongation factor Tu from Synechococcus sp. (strain JA-3-3Ab) (Cyanobacteria bacterium Yellowstone A-Prime).